A 651-amino-acid chain; its full sequence is MNSVGRRGPRRANQNGTRRRRRRTVRPVVVVQPNRAGPRRRNGRRKGRGGANFVFRPTGGTEVFVFSVDNLKANSSGAIKFGPSLSQCPALSDGILKSYHRYKITSIRVEFKSHASANTAGAIFIELDTACKQSALGSYINSFTISKTASKTFRSEAINGKEFQESTIDQFWMLYKANGTTTDTAGQFIITMSVSLMTAKXVDSSTPEPKPAPEPTPTPQPTPAPQPTPEPTPAPVPKRFFEYIGTPTGTISTRENTDSISVSKLGGQSMQYIENEKCETKVIDSFWSTNNNVSAQAAFVYPVPEGSYSVNISCEGFQSVDHIGGNEDGYWIGLIAYSNSSGDNWGVGNYKGCSFKNFLATNTWRPGHKDLKLTDCQFTDGQIVERDAVMSFHVEATGKDASFYLMAPKTMKTDKYNYVVSYGGYTNKRMEFGTISVTCDESDVEAERITRHAETPIRSKHILVSERYAEPLPTIVNQGLCDVKTPEQEQTLVDEDDRQTVSTESDIALLEYEAATAEIPDAEEDVLPSKEQLSSKPMDTSGNIIPKPKEPEVLGTYQGQNIYPEDVPPMARQKLREAANAPSTLLYERRTPKKSGNFLSRLVEANRSPTTPTAPSVSTTSNMTREQLREYTRIRNSSGITAAKAYKAQFQ.

Disordered stretches follow at residues 1–25 (MNSVGRRGPRRANQNGTRRRRRRTV), 33–52 (PNRAGPRRRNGRRKGRGGAN), 201–239 (XVDSSTPEPKPAPEPTPTPQPTPAPQPTPEPTPAPVPKR), 525–552 (DVLPSKEQLSSKPMDTSGNIIPKPKEPE), and 606–626 (NRSPTTPTAPSVSTTSNMTRE). The segment covering 37-48 (GPRRRNGRRKGR) has biased composition (basic residues). Residues 202-650 (VDSSTPEPKP…TAAKAYKAQF (449 aa)) form a readthrough domain (RTD) region. Over residues 208-236 (EPKPAPEPTPTPQPTPAPQPTPEPTPAPV) the composition is skewed to pro residues. Polar residues predominate over residues 531-543 (EQLSSKPMDTSGN). The segment covering 608–621 (SPTTPTAPSVSTTS) has biased composition (low complexity).

This sequence belongs to the luteoviruses readthrough protein family. Post-translationally, in virus particles, more than 200 amino acids are proteolytically cleaved releasing the C-terminus part of the RTD domain. The cleaved product remains attached to the virus particle.

The protein localises to the membrane. Its subcellular location is the virion. It localises to the host cell junction. The protein resides in the host plasmodesma. It is found in the host periplasm. Minor component of the viral capsid involved in aphid transmission and virus accumulation in the host. Required fro the virus to move through the aphid. The RTD domain of the protein is exposed on the surface of the particle and determines the vector specificity and intestinal tropism in the aphid. The chain is Readthrough protein P3-RTD from Avena byzantina (Oat).